The chain runs to 429 residues: 4-hydroxy-3-methylbut-2-en-1-yl diphosphate synthase (flavodoxin) (429 aa).

The [4Fe-4S] cluster site is built by Cys310, Cys313, Cys356, and Glu363.

The protein belongs to the IspG family. It depends on [4Fe-4S] cluster as a cofactor.

The catalysed reaction is (2E)-4-hydroxy-3-methylbut-2-enyl diphosphate + oxidized [flavodoxin] + H2O + 2 H(+) = 2-C-methyl-D-erythritol 2,4-cyclic diphosphate + reduced [flavodoxin]. The protein operates within isoprenoid biosynthesis; isopentenyl diphosphate biosynthesis via DXP pathway; isopentenyl diphosphate from 1-deoxy-D-xylulose 5-phosphate: step 5/6. Functionally, converts 2C-methyl-D-erythritol 2,4-cyclodiphosphate (ME-2,4cPP) into 1-hydroxy-2-methyl-2-(E)-butenyl 4-diphosphate. This Bradyrhizobium sp. (strain BTAi1 / ATCC BAA-1182) protein is 4-hydroxy-3-methylbut-2-en-1-yl diphosphate synthase (flavodoxin).